We begin with the raw amino-acid sequence, 367 residues long: Probable butyrate kinase (367 aa).

This sequence belongs to the acetokinase family.

Its subcellular location is the cytoplasm. It catalyses the reaction butanoate + ATP = butanoyl phosphate + ADP. The polypeptide is Probable butyrate kinase (Bacillus cereus (strain Q1)).